Reading from the N-terminus, the 229-residue chain is 7-cyano-7-deazaguanine synthase (229 aa).

7-17 (LSGGLDSTTVL) contacts ATP. Zn(2+) is bound by residues Cys191, Cys204, Cys207, and Cys210.

It belongs to the QueC family. Zn(2+) serves as cofactor.

It catalyses the reaction 7-carboxy-7-deazaguanine + NH4(+) + ATP = 7-cyano-7-deazaguanine + ADP + phosphate + H2O + H(+). The protein operates within purine metabolism; 7-cyano-7-deazaguanine biosynthesis. Catalyzes the ATP-dependent conversion of 7-carboxy-7-deazaguanine (CDG) to 7-cyano-7-deazaguanine (preQ(0)). The polypeptide is 7-cyano-7-deazaguanine synthase (Cyanothece sp. (strain PCC 7425 / ATCC 29141)).